The sequence spans 865 residues: SWI/SNF chromatin-remodeling complex subunit sol1 (865 aa).

Disordered regions lie at residues 1–34, 54–92, 116–143, and 163–183; these read MNNQGFVPASDYPTAVSYPTQGQSYNTQEEQPAY, MMNTSENEPNNLAHSQPFRQSPSTQRNLPNQSFDFASNG, QEKEAAMQQQQQQQQQQQLYQRQMQSRE, and VRQTPQPAPSPNTPSGNANQL. The segment covering 17-30 has biased composition (polar residues); sequence SYPTQGQSYNTQEE. Residues 121 to 139 show a composition bias toward low complexity; sequence AMQQQQQQQQQQQLYQRQM. In terms of domain architecture, ARID spans 188 to 278; sequence AASFDKFMVS…YLLPYEEAWL (91 aa). Residues 288-380 are disordered; the sequence is QQAKANHSAN…QTSSSAAPVD (93 aa). Over residues 328–353 the composition is skewed to polar residues; that stretch reads HSKSPSPAFTANRFSPAAPTTVSSER. Positions 356–368 are enriched in pro residues; the sequence is PPYPSAPTRPTPP. Phosphoserine is present on residues Ser-852 and Ser-855.

Belongs to the SWI1 family. In terms of assembly, component of the SWI/SNF global transcription activator complex composed of at least arp9, arp42, snf5, snf22, snf30, sbf59, sol1, ssr1, ssr2, ssr3, ssr4 and tfg3.

Its subcellular location is the nucleus. In terms of biological role, component of the SWI/SNF complex, an ATP-dependent chromatin remodeling complex, required for the positive and negative regulation of gene expression of a large number of genes. It changes chromatin structure by altering DNA-histone contacts within a nucleosome, leading eventually to a change in nucleosome position, thus facilitating or repressing binding of gene-specific transcription factors. This is SWI/SNF chromatin-remodeling complex subunit sol1 (sol1) from Schizosaccharomyces pombe (strain 972 / ATCC 24843) (Fission yeast).